Here is a 477-residue protein sequence, read N- to C-terminus: UDP-N-acetylmuramate--L-alanine ligase (477 aa).

120 to 126 (GSHGKTT) contacts ATP.

Belongs to the MurCDEF family.

The protein resides in the cytoplasm. The enzyme catalyses UDP-N-acetyl-alpha-D-muramate + L-alanine + ATP = UDP-N-acetyl-alpha-D-muramoyl-L-alanine + ADP + phosphate + H(+). It participates in cell wall biogenesis; peptidoglycan biosynthesis. Functionally, cell wall formation. This is UDP-N-acetylmuramate--L-alanine ligase from Rickettsia canadensis (strain McKiel).